Here is a 406-residue protein sequence, read N- to C-terminus: Probable endo-xylogalacturonan hydrolase A (406 aa).

The first 18 residues, 1 to 18 (MLYPRNLALFSLLSLSSA), serve as a signal peptide directing secretion. PbH1 repeat units follow at residues 183–213 (TQHVTFKNLRMDATSNSQNPPKNTDGFDIGA), 214–235 (STHVTISSVSVTNDDDCVAFKP), 237–257 (SNYVTVEDVTCTGSHGISVGS), and 299–320 (VKNVTFSDFNVRGCDYAFQIES). D228 acts as the Proton donor in catalysis. H251 is a catalytic residue. N301 carries N-linked (GlcNAc...) asparagine glycosylation.

The protein belongs to the glycosyl hydrolase 28 family.

It localises to the secreted. Functionally, pectinolytic enzyme involved in the degradation of xylogalacturonan (xga), a galacturonan backbone heavily substituted with xylose, and which is one important component of the hairy regions of pectin. Activity requires a galacturonic acid backbone substituted with xylose. The protein is Probable endo-xylogalacturonan hydrolase A (xghA) of Aspergillus fumigatus (strain ATCC MYA-4609 / CBS 101355 / FGSC A1100 / Af293) (Neosartorya fumigata).